The chain runs to 265 residues: Protein Rv2993c (265 aa).

Residues glutamate 114, glutamate 116, and aspartate 145 each coordinate a divalent metal cation.

This sequence in the C-terminal section; belongs to the FAH family. A divalent metal cation serves as cofactor.

The protein is Protein Rv2993c of Mycobacterium tuberculosis (strain ATCC 25618 / H37Rv).